The sequence spans 81 residues: MDSLTAAASVIAAALAVGLAAIGPGIGQGNAAGSAAEGIARQPEAEGKIRGTLLLSLAFMEALTIYGLVVALVLLFANPFA.

2 helical membrane-spanning segments follow: residues 6 to 26 and 57 to 77; these read AAAS…GPGI and LAFM…LLFA.

Belongs to the ATPase C chain family. F-type ATPases have 2 components, F(1) - the catalytic core - and F(0) - the membrane proton channel. F(1) has five subunits: alpha(3), beta(3), gamma(1), delta(1), epsilon(1). F(0) has four main subunits: a(1), b(1), b'(1) and c(10-14). The alpha and beta chains form an alternating ring which encloses part of the gamma chain. F(1) is attached to F(0) by a central stalk formed by the gamma and epsilon chains, while a peripheral stalk is formed by the delta, b and b' chains.

The protein resides in the cellular thylakoid membrane. F(1)F(0) ATP synthase produces ATP from ADP in the presence of a proton or sodium gradient. F-type ATPases consist of two structural domains, F(1) containing the extramembraneous catalytic core and F(0) containing the membrane proton channel, linked together by a central stalk and a peripheral stalk. During catalysis, ATP synthesis in the catalytic domain of F(1) is coupled via a rotary mechanism of the central stalk subunits to proton translocation. Its function is as follows. Key component of the F(0) channel; it plays a direct role in translocation across the membrane. A homomeric c-ring of between 10-14 subunits forms the central stalk rotor element with the F(1) delta and epsilon subunits. The polypeptide is ATP synthase subunit c (Picosynechococcus sp. (strain ATCC 27264 / PCC 7002 / PR-6) (Agmenellum quadruplicatum)).